Here is a 448-residue protein sequence, read N- to C-terminus: 3-phosphoshikimate 1-carboxyvinyltransferase (448 aa).

3-phosphoshikimate is bound by residues lysine 28, serine 29, and arginine 33. Lysine 28 serves as a coordination point for phosphoenolpyruvate. Glycine 100 and arginine 128 together coordinate phosphoenolpyruvate. 3-phosphoshikimate contacts are provided by serine 173, glutamine 175, aspartate 326, and lysine 353. A phosphoenolpyruvate-binding site is contributed by glutamine 175. Residue aspartate 326 is the Proton acceptor of the active site. Residues arginine 357 and arginine 405 each coordinate phosphoenolpyruvate.

It belongs to the EPSP synthase family. In terms of assembly, monomer.

It localises to the cytoplasm. The catalysed reaction is 3-phosphoshikimate + phosphoenolpyruvate = 5-O-(1-carboxyvinyl)-3-phosphoshikimate + phosphate. It participates in metabolic intermediate biosynthesis; chorismate biosynthesis; chorismate from D-erythrose 4-phosphate and phosphoenolpyruvate: step 6/7. In terms of biological role, catalyzes the transfer of the enolpyruvyl moiety of phosphoenolpyruvate (PEP) to the 5-hydroxyl of shikimate-3-phosphate (S3P) to produce enolpyruvyl shikimate-3-phosphate and inorganic phosphate. This Sinorhizobium fredii (strain NBRC 101917 / NGR234) protein is 3-phosphoshikimate 1-carboxyvinyltransferase.